The sequence spans 571 residues: Phosphatidylinositol-3,5-bisphosphate 3-phosphatase MTMR2 (571 aa).

The 67-residue stretch at 1 to 67 (MEEPPLLPGE…GVINRVEKIG (67 aa)) folds into the GRAM domain. One can recognise a Myotubularin phosphatase domain in the interval 133 to 508 (GWKVYDPIWE…RHLELWVGYY (376 aa)). 3 residues coordinate a 1,2-diacyl-sn-glycero-3-phospho-(1D-myo-inositol-3,5-bisphosphate): asparagine 258, asparagine 283, and isoleucine 284. 3 residues coordinate a 1,2-diacyl-sn-glycero-3-phospho-(1D-myo-inositol-3-phosphate): asparagine 258, asparagine 283, and isoleucine 284. Residue cysteine 345 is the Phosphocysteine intermediate of the active site. A 1,2-diacyl-sn-glycero-3-phospho-(1D-myo-inositol-3,5-bisphosphate)-binding residues include serine 346, aspartate 347, glycine 348, tryptophan 349, aspartate 350, arginine 351, arginine 387, and arginine 391. Residues serine 346, aspartate 347, glycine 348, tryptophan 349, aspartate 350, and arginine 351 each coordinate a 1,2-diacyl-sn-glycero-3-phospho-(1D-myo-inositol-3-phosphate). Arginine 391 provides a ligand contact to a 1,2-diacyl-sn-glycero-3-phospho-(1D-myo-inositol-3-phosphate). Residues 521-553 (VHNRYKELLAKRAELQKKVEELQREITNRSTSS) are a coiled coil. The tract at residues 544-571 (REITNRSTSSSERAGSPAQCVTPVQTVV) is disordered.

Belongs to the protein-tyrosine phosphatase family. Non-receptor class myotubularin subfamily. In terms of assembly, homooligomer and heterooligomer.

The protein localises to the cytoplasm. Its subcellular location is the early endosome membrane. It catalyses the reaction a 1,2-diacyl-sn-glycero-3-phospho-(1D-myo-inositol-3,5-bisphosphate) + H2O = a 1,2-diacyl-sn-glycero-3-phospho-(1D-myo-inositol-5-phosphate) + phosphate. It carries out the reaction a 1,2-diacyl-sn-glycero-3-phospho-(1D-myo-inositol-3-phosphate) + H2O = a 1,2-diacyl-sn-glycero-3-phospho-(1D-myo-inositol) + phosphate. The enzyme catalyses 1,2-dioctanoyl-sn-glycero-3-phospho-(1-D-myo-inositol-3-phosphate) + H2O = 1,2-dioctanoyl-sn-glycero-3-phospho-(1D-myo-inositol) + phosphate. The catalysed reaction is 1,2-dioctanoyl-sn-glycero-3-phospho-(1D-myo-inositol-3,5-bisphosphate) + H2O = 1,2-dioctanoyl-sn-glycero-3-phospho-(1D-myo-inositol-5-phosphate) + phosphate. Functionally, lipid phosphatase that specifically dephosphorylates the D-3 position of phosphatidylinositol 3-phosphate and phosphatidylinositol 3,5-bisphosphate, generating phosphatidylinositol and phosphatidylinositol 5-phosphate. Regulates the level of these phosphoinositides critical for various biological processes including autophagy initiation and autophagosome maturation. This chain is Phosphatidylinositol-3,5-bisphosphate 3-phosphatase MTMR2, found in Gallus gallus (Chicken).